Reading from the N-terminus, the 594-residue chain is Beta-mannosyltransferase 3 (594 aa).

Residues 1 to 6 are Cytoplasmic-facing; it reads MRIRSN. A helical membrane pass occupies residues 7–27; that stretch reads VLLLSTAGALALVWFAVVFSW. The Extracellular portion of the chain corresponds to 28 to 594; sequence DDKSIFGIPT…KDEVKDTKAK (567 aa). N-linked (GlcNAc...) asparagine glycosylation occurs at asparagine 305. Positions 512–594 form a coiled coil; that stretch reads VTRGEEDRLK…KDEVKDTKAK (83 aa). Residues 517–558 show a composition bias toward basic and acidic residues; the sequence is EDRLKNKEKERKIEEKRKKEEERKKKEEEKKKKEEEEKKKKE. The tract at residues 517–564 is disordered; the sequence is EDRLKNKEKERKIEEKRKKEEERKKKEEEKKKKEEEEKKKKEEEEEEE.

This sequence belongs to the BMT family.

The protein localises to the membrane. Its function is as follows. Beta-mannosyltransferase involved in cell wall biosynthesis. This is Beta-mannosyltransferase 3 (BMT3) from Komagataella phaffii (strain ATCC 76273 / CBS 7435 / CECT 11047 / NRRL Y-11430 / Wegner 21-1) (Yeast).